A 591-amino-acid chain; its full sequence is Metastasis-associated protein MTA3 (591 aa).

One can recognise a BAH domain in the interval 1 to 147 (MAANMYRVGD…PSVKTLLADK (147 aa)). One can recognise an ELM2 domain in the interval 148 to 258 (GEIRVGPKYQ…SAISVLVPLG (111 aa)). Residues 265–317 (DEMEEWSASEACLFEEALEKYGKDFNDIRQDFLPWKSLTSIIEYYYMWKTTDR) enclose the SANT domain. A GATA-type; atypical zinc finger spans residues 377–404 (CESCYATQSHQWYSWGPPNMQCRLCATC). The interval 417 to 456 (PTQSDEEKSPSPTAEDPRARSHMSRQALQGMPVRNTGSPK) is disordered. The segment covering 421–435 (DEEKSPSPTAEDPRA) has biased composition (basic and acidic residues). 2 positions are modified to phosphoserine: S425 and S427. Position 452 is a phosphothreonine (T452). S516 is modified (phosphoserine).

The protein belongs to the metastasis-associated protein family. In terms of assembly, component of the nucleosome remodeling and deacetylase (NuRD) repressor complex, composed of core proteins MTA1, MTA2, MTA3, RBBP4, RBBP7, HDAC1, HDAC2, MBD2, MBD3, and peripherally associated proteins CDK2AP1, CDK2AP2, GATAD2A, GATAD2B, CHD3, CHD4 and CHD5. The exact stoichiometry of the NuRD complex is unknown, and some subunits such as MBD2 and MBD3, GATAD2A and GATAD2B, and CHD3, CHD4 and CHD5 define mutually exclusive NuRD complexes. Interacts with BCL6. Interacts with NACC2. Interacts with PWWP2B. As to expression, expressed in heart, brain, spleen, lung, liver and kidney.

The protein resides in the nucleus. It is found in the cytoplasm. Its function is as follows. Acts as a component of the histone deacetylase NuRD complex which participates in the remodeling of chromatin. Plays a role in maintenance of the normal epithelial architecture through the repression of SNAI1 transcription in a histone deacetylase-dependent manner, and thus the regulation of E-cadherin levels. Contributes to transcriptional repression by BCL6. The sequence is that of Metastasis-associated protein MTA3 (Mta3) from Mus musculus (Mouse).